Consider the following 164-residue polypeptide: Diphosphoinositol polyphosphate phosphohydrolase 3-alpha (164 aa).

Substrate is bound by residues Arg-9, 17 to 19 (KKR), and 38 to 40 (SSR). The region spanning 17-144 (KKRAACLCFR…VHAEYLEKLK (128 aa)) is the Nudix hydrolase domain. Residues Gly-49 and Glu-65 each coordinate Mg(2+). The Nudix box signature appears at 50–71 (GGMEPEEEPDGAAVREVYEEAG). Glu-68 serves as the catalytic Proton acceptor. Glu-69 is a binding site for Mg(2+). Residues 89–91 (RKH), Arg-115, and Lys-133 each bind substrate. The tract at residues 144–164 (KLGGSPTNGNSAAPSPPESEP) is disordered.

The protein belongs to the Nudix hydrolase family. DIPP subfamily. The cofactor is Mg(2+). Mn(2+) is required as a cofactor. Mainly expressed in testis, liver kidney and, at lower level, in heart, brain, spleen, lung and skeletal muscle.

It is found in the cytoplasm. It carries out the reaction diphospho-myo-inositol polyphosphate + H2O = myo-inositol polyphosphate + phosphate.. The enzyme catalyses P(1),P(6)-bis(5'-adenosyl) hexaphosphate + H2O = adenosine 5'-pentaphosphate + AMP + 2 H(+). The catalysed reaction is P(1),P(5)-bis(5'-adenosyl) pentaphosphate + H2O = adenosine 5'-tetraphosphate + AMP + 2 H(+). Functionally, cleaves a beta-phosphate from the diphosphate groups in PP-InsP5 (diphosphoinositol pentakisphosphate), suggesting that it may play a role in signal transduction. Also able to catalyze the hydrolysis of dinucleoside oligophosphates, with Ap6A and Ap5A being the preferred substrates. The major reaction products are ADP and p4a from Ap6A and ADP and ATP from Ap5A. Also able to hydrolyze 5-phosphoribose 1-diphosphate; however, the relevance of such activity in vivo remains unclear. This Mus musculus (Mouse) protein is Diphosphoinositol polyphosphate phosphohydrolase 3-alpha.